The chain runs to 309 residues: Foldase protein PrsA (309 aa).

A signal peptide spans 1-20 (MKKKIVAGAVTLLSVAVLAA). C21 carries N-palmitoyl cysteine lipidation. The S-diacylglycerol cysteine moiety is linked to residue C21. The PpiC domain maps to 144-241 (TPEVTAQIIK…ASYYIVKLVS (98 aa)).

Belongs to the PrsA family.

Its subcellular location is the cell membrane. The enzyme catalyses [protein]-peptidylproline (omega=180) = [protein]-peptidylproline (omega=0). Functionally, plays a major role in protein secretion by helping the post-translocational extracellular folding of several secreted proteins. In Streptococcus gordonii (strain Challis / ATCC 35105 / BCRC 15272 / CH1 / DL1 / V288), this protein is Foldase protein PrsA.